An 831-amino-acid chain; its full sequence is MLTIQFLCPLPNGLHARPAWELKEQCSQWQSEITFINHRQNAKADAKSSLALIGTGTLFNDSCSLNISGSDEEQARRVLEEYIQVRFIDSDSVQPTLAELTAHPLPRSLSRLNPDLLYGNVLASGVGVGTLTLLQSDSLDSYRVIPASAQDSTLLEHSLATLAEQLNQQLRERDGESKTILSAHLSLIQDDEFAGNIRHLMAEQHQGLGAAIISNMEQICAKLSASASDYLRERVSDIRDISEQLLHITWPELKPRNNLVLEKPTILVAEDLTPSQFLSLDLKNLAGMILEKTGRTSHTLILARASAIPVLSGLPLDAIARYAGQPAVLDAQCGVLAINPNDAVSGYYQVAQTLADKRQKQQAQAAAQLAYSRDKKRIDIAANIGTALEAPGAFANGAEGVGLFRTEMLYMDRDSAPDEQEQFEAYQQVLLAAGDKPIIFRTMDIGGDKSIPYLNIPQEENPFLGYRAVRIYPEFAGLFRTQLRAILRAASFGNAQLMIPMVHSLDQILWVKGELQKAIVELKRDGLRHAETITLGIMVEVPSVCYIIDHFCDEVDFFSIGSNDMTQYLYAVDRNNPRVSPLYNPITPSFLRMLQQIVTAAHQRGKWVGICGELGGESRYLPLLLGLGLDELSMSSPRIPAVKSQLRQLDSEACRELARQACECRSAQEIEALLTAFTPEEDVRPLLALENIFVDQSFSNKEQAIQFLCGNLGVNGRTEHPFELEEDVWQREEIVTTGVGFGVAIPHTKSQWIRHSSISIARLVKPVDWQSEMGEVELVIMLTLGANEGMNHVKVFSQLARKLVNKNFRQSLFAAQDAQSILTLLETELTF.

The 90-residue stretch at 1–90 (MLTIQFLCPL…EYIQVRFIDS (90 aa)) folds into the HPr domain. The Pros-phosphohistidine intermediate; for HPr activity role is filled by His-15. At His-15 the chain carries Phosphohistidine; by EI. The segment at 119 to 650 (GNVLASGVGV…AVKSQLRQLD (532 aa)) is PTS EI. The Tele-phosphohistidine intermediate; for PTS EI activity role is filled by His-298. His-298 carries the phosphohistidine; by autocatalysis modification. Residues Arg-405 and Arg-441 each contribute to the phosphoenolpyruvate site. Mg(2+) is bound by residues Glu-540 and Asp-564. Phosphoenolpyruvate-binding positions include 563–564 (ND) and Arg-574. Cys-611 acts as the Proton donor; for EI activity in catalysis. The PTS EIIA type-2 domain maps to 685 to 828 (PLLALENIFV…QSILTLLETE (144 aa)). His-747 functions as the Tele-phosphohistidine intermediate; for PTS EIIA activity in the catalytic mechanism. Position 747 is a phosphohistidine; by HPr (His-747).

It belongs to the PEP-utilizing enzyme family. Mg(2+) serves as cofactor.

It is found in the cytoplasm. It carries out the reaction L-histidyl-[protein] + phosphoenolpyruvate = N(pros)-phospho-L-histidyl-[protein] + pyruvate. It catalyses the reaction D-fructose(out) + N(pros)-phospho-L-histidyl-[protein] = D-fructose 1-phosphate(in) + L-histidyl-[protein]. Functionally, multifunctional protein that includes general (non sugar-specific) and sugar-specific components of the phosphoenolpyruvate-dependent sugar phosphotransferase system (sugar PTS). This major carbohydrate active transport system catalyzes the phosphorylation of incoming sugar substrates concomitantly with their translocation across the cell membrane. The enzyme II FryABC PTS system is involved in fructose transport. The protein is Multiphosphoryl transfer protein (fryA) of Escherichia coli O6:H1 (strain CFT073 / ATCC 700928 / UPEC).